Here is a 428-residue protein sequence, read N- to C-terminus: uncharacterized protein (428 aa).

3 disordered regions span residues 1 to 25 (MRDNSAKGITAGSESQQTTYDPTRT), 157 to 219 (DTAK…TEQV), and 247 to 271 (DFGTTPSSSGSGGNSNPGSPTPWRP). Positions 12–22 (GSESQQTTYDP) are enriched in polar residues. Residues 157 to 171 (DTAKSNEKLQGDESK) show a composition bias toward basic and acidic residues. Residues 172–186 (SSNGSSSTSTTTQRG) show a composition bias toward low complexity. A compositionally biased stretch (polar residues) spans 206-217 (GSQGNSGEQGTE).

This sequence belongs to the adhesin P1 family.

This is an uncharacterized protein from Mycoplasma pneumoniae (strain ATCC 29342 / M129 / Subtype 1) (Mycoplasmoides pneumoniae).